A 681-amino-acid chain; its full sequence is DNA-directed RNA polymerase subunit beta' (681 aa).

Residues Cys-69, Cys-71, Cys-87, and Cys-90 each contribute to the Zn(2+) site. 3 residues coordinate Mg(2+): Asp-489, Asp-491, and Asp-493.

This sequence belongs to the RNA polymerase beta' chain family. RpoC1 subfamily. In plastids the minimal PEP RNA polymerase catalytic core is composed of four subunits: alpha, beta, beta', and beta''. When a (nuclear-encoded) sigma factor is associated with the core the holoenzyme is formed, which can initiate transcription. Mg(2+) is required as a cofactor. Requires Zn(2+) as cofactor.

Its subcellular location is the plastid. It localises to the chloroplast. It carries out the reaction RNA(n) + a ribonucleoside 5'-triphosphate = RNA(n+1) + diphosphate. Its function is as follows. DNA-dependent RNA polymerase catalyzes the transcription of DNA into RNA using the four ribonucleoside triphosphates as substrates. The polypeptide is DNA-directed RNA polymerase subunit beta' (Solanum bulbocastanum (Wild potato)).